Here is an 827-residue protein sequence, read N- to C-terminus: Glycerol-3-phosphate acyltransferase (827 aa).

Residues 325–330 (CHRSHM) carry the HXXXXD motif motif.

Belongs to the GPAT/DAPAT family.

The protein resides in the cell inner membrane. The enzyme catalyses sn-glycerol 3-phosphate + an acyl-CoA = a 1-acyl-sn-glycero-3-phosphate + CoA. Its pathway is phospholipid metabolism; CDP-diacylglycerol biosynthesis; CDP-diacylglycerol from sn-glycerol 3-phosphate: step 1/3. The protein is Glycerol-3-phosphate acyltransferase of Shigella sonnei (strain Ss046).